The following is a 119-amino-acid chain: Phosphoribosyl-AMP cyclohydrolase (119 aa).

Asp-71 is a binding site for Mg(2+). Cys-72 contacts Zn(2+). Mg(2+)-binding residues include Asp-73 and Asp-75. Zn(2+) is bound by residues Cys-90 and Cys-97.

It belongs to the PRA-CH family. In terms of assembly, homodimer. The cofactor is Mg(2+). Zn(2+) serves as cofactor.

It localises to the cytoplasm. The catalysed reaction is 1-(5-phospho-beta-D-ribosyl)-5'-AMP + H2O = 1-(5-phospho-beta-D-ribosyl)-5-[(5-phospho-beta-D-ribosylamino)methylideneamino]imidazole-4-carboxamide. Its pathway is amino-acid biosynthesis; L-histidine biosynthesis; L-histidine from 5-phospho-alpha-D-ribose 1-diphosphate: step 3/9. In terms of biological role, catalyzes the hydrolysis of the adenine ring of phosphoribosyl-AMP. The sequence is that of Phosphoribosyl-AMP cyclohydrolase from Brucella abortus (strain 2308).